The primary structure comprises 428 residues: Kynureninase (428 aa).

Pyridoxal 5'-phosphate contacts are provided by residues threonine 104, threonine 105, 132–135 (FPSD), aspartate 213, histidine 216, and tyrosine 238. The residue at position 239 (lysine 239) is an N6-(pyridoxal phosphate)lysine. Pyridoxal 5'-phosphate is bound by residues tryptophan 267 and threonine 295.

Belongs to the kynureninase family. In terms of assembly, homodimer. It depends on pyridoxal 5'-phosphate as a cofactor.

It catalyses the reaction L-kynurenine + H2O = anthranilate + L-alanine + H(+). The catalysed reaction is 3-hydroxy-L-kynurenine + H2O = 3-hydroxyanthranilate + L-alanine + H(+). Its pathway is amino-acid degradation; L-kynurenine degradation; L-alanine and anthranilate from L-kynurenine: step 1/1. The protein operates within cofactor biosynthesis; NAD(+) biosynthesis; quinolinate from L-kynurenine: step 2/3. Its function is as follows. Catalyzes the cleavage of L-kynurenine (L-Kyn) and L-3-hydroxykynurenine (L-3OHKyn) into anthranilic acid (AA) and 3-hydroxyanthranilic acid (3-OHAA), respectively. This Bacillus mycoides (strain KBAB4) (Bacillus weihenstephanensis) protein is Kynureninase.